We begin with the raw amino-acid sequence, 223 residues long: MKSAVVQLPGLNRDRDMIAALTKISGQPPVTIWQTETEIPDVDLIVIPGGFSYGDYLRCGAIAARMPVMQAIIDKASKGVKVLGVCNGFQILVEAGLLPGALMRNSSLKFVCREIKLEVVNAETDFTRAYAQGQVIRCPVAHHDGNYFADDATLAAIEGNGQVVFRYAEGTNPNGSINDIAAVMNEKGNVLGMMPHPENLIEAAHGGSDGRGLFASALDVIAA.

The region spanning 3–223 is the Glutamine amidotransferase type-1 domain; sequence SAVVQLPGLN…FASALDVIAA (221 aa). Cysteine 86 (nucleophile) is an active-site residue. Active-site residues include histidine 196 and glutamate 198.

As to quaternary structure, part of the FGAM synthase complex composed of 1 PurL, 1 PurQ and 2 PurS subunits.

The protein resides in the cytoplasm. The enzyme catalyses N(2)-formyl-N(1)-(5-phospho-beta-D-ribosyl)glycinamide + L-glutamine + ATP + H2O = 2-formamido-N(1)-(5-O-phospho-beta-D-ribosyl)acetamidine + L-glutamate + ADP + phosphate + H(+). It catalyses the reaction L-glutamine + H2O = L-glutamate + NH4(+). It participates in purine metabolism; IMP biosynthesis via de novo pathway; 5-amino-1-(5-phospho-D-ribosyl)imidazole from N(2)-formyl-N(1)-(5-phospho-D-ribosyl)glycinamide: step 1/2. Functionally, part of the phosphoribosylformylglycinamidine synthase complex involved in the purines biosynthetic pathway. Catalyzes the ATP-dependent conversion of formylglycinamide ribonucleotide (FGAR) and glutamine to yield formylglycinamidine ribonucleotide (FGAM) and glutamate. The FGAM synthase complex is composed of three subunits. PurQ produces an ammonia molecule by converting glutamine to glutamate. PurL transfers the ammonia molecule to FGAR to form FGAM in an ATP-dependent manner. PurS interacts with PurQ and PurL and is thought to assist in the transfer of the ammonia molecule from PurQ to PurL. The chain is Phosphoribosylformylglycinamidine synthase subunit PurQ from Rhizobium johnstonii (strain DSM 114642 / LMG 32736 / 3841) (Rhizobium leguminosarum bv. viciae).